Consider the following 404-residue polypeptide: MPPKKAPPGPSKKTEQKKKEKVIEDKTFGLKNKKGNKQQKFIQQVQKQVQSGGQHPRQDGDKRKEEKEKKLAEQREMALIFKPVQTQKVEKGTDPKSVVCAFFKQGTCTKGDKCKFSHDLSQENKVEKRSIYVDMRDEDDPMTNWDDAKLKEVVEKKSSGEKQRPTTDIICKFFLEAVEKSKYGWFWECPNGGKCIYRHALPAGYVLKRDKKKEEKPTEISLVDLIEKERAALGPNQTRVTLESFLAWKKRKIAEKKAKLAAEEERKKSDFSKGKQFGISGREMFSFNPDLVDDGPMEEGDAAFDVYNREDDDDNAVEFKELDLAALSLAAKEVDGSGTIASTNRLLDQATEAAKTAAAEDAAADEDGPSSSAPANDAAPINKDLFVDLAGELDDLDLDDEDDD.

Over residues 1-10 (MPPKKAPPGP) the composition is skewed to pro residues. The segment at 1-71 (MPPKKAPPGP…KRKEEKEKKL (71 aa)) is disordered. Over residues 12-28 (KKTEQKKKEKVIEDKTF) the composition is skewed to basic and acidic residues. Residues 38–50 (QQKFIQQVQKQVQ) show a composition bias toward low complexity. A compositionally biased stretch (basic and acidic residues) spans 56-71 (PRQDGDKRKEEKEKKL). C3H1-type zinc fingers lie at residues 94 to 121 (DPKS…HDLS) and 165 to 202 (PTTD…HALP). T218 carries the post-translational modification Phosphothreonine. S221 is subject to Phosphoserine. Residues 246-270 (LAWKKRKIAEKKAKLAAEEERKKSD) are a coiled coil. Composition is skewed to low complexity over residues 352 to 361 (EAAKTAAAED) and 369 to 380 (PSSSAPANDAAP). Residues 352-380 (EAAKTAAAEDAAADEDGPSSSAPANDAAP) form a disordered region.

Belongs to the ZC3H15/TMA46 family.

This is Zinc finger CCCH domain-containing protein 15 homolog from Drosophila melanogaster (Fruit fly).